Reading from the N-terminus, the 491-residue chain is Protein nucleotidyltransferase YdiU (491 aa).

ATP is bound by residues Gly94, Gly96, Arg97, Lys117, Asp129, Gly130, Arg180, and Arg187. The active-site Proton acceptor is Asp256. Mg(2+) contacts are provided by Asn257 and Asp266. An ATP-binding site is contributed by Asp266.

The protein belongs to the SELO family. Mg(2+) is required as a cofactor. The cofactor is Mn(2+).

It carries out the reaction L-seryl-[protein] + ATP = 3-O-(5'-adenylyl)-L-seryl-[protein] + diphosphate. It catalyses the reaction L-threonyl-[protein] + ATP = 3-O-(5'-adenylyl)-L-threonyl-[protein] + diphosphate. The enzyme catalyses L-tyrosyl-[protein] + ATP = O-(5'-adenylyl)-L-tyrosyl-[protein] + diphosphate. The catalysed reaction is L-histidyl-[protein] + UTP = N(tele)-(5'-uridylyl)-L-histidyl-[protein] + diphosphate. It carries out the reaction L-seryl-[protein] + UTP = O-(5'-uridylyl)-L-seryl-[protein] + diphosphate. It catalyses the reaction L-tyrosyl-[protein] + UTP = O-(5'-uridylyl)-L-tyrosyl-[protein] + diphosphate. Functionally, nucleotidyltransferase involved in the post-translational modification of proteins. It can catalyze the addition of adenosine monophosphate (AMP) or uridine monophosphate (UMP) to a protein, resulting in modifications known as AMPylation and UMPylation. The protein is Protein nucleotidyltransferase YdiU of Clostridium botulinum (strain Loch Maree / Type A3).